Reading from the N-terminus, the 212-residue chain is MQLSLALCLVCLLVHAAFRVVEGQGWQAFKNDATEIIPELGEYPEPLPELNNKTMNRAENGGRPPHHPFETKDASEYSCRELHFTRYVTDGPCRSAKPVTELVCSGQCGPARLLPNAIGRGKWWRPSGPDFRCIPDRYRAQRVQLLCPGGAAPRARKVRLVASCKCKRLTRFHNQSELKDFGPEAARPQTGRKLRPRARGTKASRAELENAY.

Positions methionine 1–glycine 23 are cleaved as a signal peptide. N-linked (GlcNAc...) asparagine glycosylation is present at asparagine 52. 4 disulfide bridges follow: cysteine 79/cysteine 133, cysteine 93/cysteine 147, cysteine 104/cysteine 164, and cysteine 108/cysteine 166. One can recognise a CTCK domain in the interval glutamate 81–arginine 171. A glycan (N-linked (GlcNAc...) asparagine) is linked at asparagine 174. The segment at lysine 179–tyrosine 212 is disordered. Basic residues predominate over residues threonine 190–lysine 202.

It belongs to the sclerostin family. As to quaternary structure, interacts with LRP4 (via the extracellular domain); the interaction facilitates the inhibition of Wnt signaling. Interacts with LRP5 (via the first two YWTD-EGF repeat domains); the interaction inhibits Wnt-mediated signaling. Interacts with LRP6.

The protein localises to the secreted. Its subcellular location is the extracellular space. It localises to the extracellular matrix. Functionally, negative regulator of bone growth that acts through inhibition of Wnt signaling and bone formation. The protein is Sclerostin of Bos taurus (Bovine).